We begin with the raw amino-acid sequence, 370 residues long: 3-hydroxy-3-methylglutaryl-CoA lyase, cytoplasmic (370 aa).

Glycine 2 carries N-myristoyl glycine lipidation. In terms of domain architecture, Pyruvate carboxyltransferase spans valine 78 to methionine 345. Arginine 86 contacts substrate. Residues aspartate 87, histidine 278, and histidine 280 each coordinate a divalent metal cation. The active site involves cysteine 311. Residue asparagine 320 participates in a divalent metal cation binding.

Belongs to the HMG-CoA lyase family. A divalent metal cation is required as a cofactor.

Its subcellular location is the cytoplasm. The protein resides in the cytosol. It is found in the endoplasmic reticulum membrane. It carries out the reaction (3S)-3-hydroxy-3-methylglutaryl-CoA = acetoacetate + acetyl-CoA. The protein operates within metabolic intermediate metabolism; (S)-3-hydroxy-3-methylglutaryl-CoA degradation; acetoacetate from (S)-3-hydroxy-3-methylglutaryl-CoA: step 1/1. Non-mitochondrial 3-hydroxy-3-methylglutaryl-CoA lyase that catalyzes a cation-dependent cleavage of (S)-3-hydroxy-3-methylglutaryl-CoA into acetyl-CoA and acetoacetate, a key step in ketogenesis, the products of which support energy production in nonhepatic animal tissues. The chain is 3-hydroxy-3-methylglutaryl-CoA lyase, cytoplasmic (HMGCLL1) from Homo sapiens (Human).